The primary structure comprises 161 residues: F-box only protein 48 (161 aa).

The segment at 1–25 (MKKTSKKNNNFKIPGTELNSADAER) is disordered. The F-box domain maps to 32-79 (RNFVELLPLEVTYKIFSQLDIQSLCRASRTCTGWNCAIRNNDSLWKPH).

The polypeptide is F-box only protein 48 (Fbxo48) (Mus musculus (Mouse)).